Consider the following 479-residue polypeptide: Adenylate kinase 8 (479 aa).

Adenylate kinase regions lie at residues Pro58–Gln258 and Pro269–Ile471. Ala67–Thr72 contributes to the ATP binding site. Positions Thr87–Val113 are NMP 1. AMP is bound by residues Gly140–Glu143, Gln147, and Arg203. The tract at residues Gly177–Val206 is LID 1. An ATP-binding site is contributed by Gly278–Leu283. The interval Cys298–Val327 is NMP 2. AMP-binding positions include Met325–Val327, Gly354–Arg357, and Gln361. The tract at residues Leu391–Asp424 is LID 2. Residue Arg392 participates in ATP binding.

Belongs to the adenylate kinase family. In terms of assembly, interacts with CFAP45 and CFAP52; CFAP45 and AK8 dimerization may create a cavity at the interface of the dimer that can accommodate AMP. In terms of tissue distribution, expressed in respiratory cells (at protein level).

It localises to the cytoplasm. The protein localises to the cytosol. Its subcellular location is the cytoskeleton. The protein resides in the cilium axoneme. The catalysed reaction is AMP + ATP = 2 ADP. It catalyses the reaction a 2'-deoxyribonucleoside 5'-diphosphate + ATP = a 2'-deoxyribonucleoside 5'-triphosphate + ADP. The enzyme catalyses a ribonucleoside 5'-diphosphate + ATP = a ribonucleoside 5'-triphosphate + ADP. Nucleoside monophosphate (NMP) kinase that catalyzes the reversible transfer of the terminal phosphate group between nucleoside triphosphates and monophosphates. Has highest activity toward AMP, and weaker activity toward dAMP, CMP and dCMP. Also displays broad nucleoside diphosphate kinase activity. The protein is Adenylate kinase 8 (AK8) of Homo sapiens (Human).